Here is a 165-residue protein sequence, read N- to C-terminus: Chorismate pyruvate-lyase (165 aa).

Positions 35, 77, 115, and 156 each coordinate substrate.

Belongs to the UbiC family. Monomer.

It localises to the cytoplasm. It carries out the reaction chorismate = 4-hydroxybenzoate + pyruvate. The protein operates within cofactor biosynthesis; ubiquinone biosynthesis. Its function is as follows. Removes the pyruvyl group from chorismate, with concomitant aromatization of the ring, to provide 4-hydroxybenzoate (4HB) for the ubiquinone pathway. The polypeptide is Chorismate pyruvate-lyase (Enterobacter sp. (strain 638)).